Here is a 170-residue protein sequence, read N- to C-terminus: MILDVVIEDARWDAAALEKQAQEAVSATLAYLELEDEDWEVTVLGCDDARIADLNAEFREKPKPTNVLSWPAQELAAAQDGGQPTPPEVDFMGDAALGDIAISYDTCVKEANLAHKSREDHVRHLLVHGTLHLLGYDHIRDGDATIMETLEVGILGKLGIPDPYIIEDGP.

Zn(2+) is bound by residues H128, H132, and H138.

Belongs to the endoribonuclease YbeY family. Requires Zn(2+) as cofactor.

The protein resides in the cytoplasm. Functionally, single strand-specific metallo-endoribonuclease involved in late-stage 70S ribosome quality control and in maturation of the 3' terminus of the 16S rRNA. The chain is Endoribonuclease YbeY from Ruegeria sp. (strain TM1040) (Silicibacter sp.).